A 153-amino-acid chain; its full sequence is Zinc finger protein GIS2 (153 aa).

7 consecutive CCHC-type zinc fingers follow at residues 4–21 (KACY…DCDS), 23–40 (RLCY…DCTM), 47–64 (KQCY…ECTV), 65–82 (QRCF…ECPE), 92–109 (VSCY…DCMK), 116–133 (LKCY…DCQN), and 135–152 (RLCY…DCPK).

The protein resides in the cytoplasm. In terms of biological role, may act in the sexual differentiation pathway. The sequence is that of Zinc finger protein GIS2 (GIS2) from Saccharomyces cerevisiae (strain ATCC 204508 / S288c) (Baker's yeast).